The sequence spans 440 residues: ATP-dependent protease ATPase subunit HslU (440 aa).

Residues Val18, 60–65, Asp254, Glu319, and Arg391 each bind ATP; that span reads GVGKTE.

Belongs to the ClpX chaperone family. HslU subfamily. In terms of assembly, a double ring-shaped homohexamer of HslV is capped on each side by a ring-shaped HslU homohexamer. The assembly of the HslU/HslV complex is dependent on binding of ATP.

It localises to the cytoplasm. ATPase subunit of a proteasome-like degradation complex; this subunit has chaperone activity. The binding of ATP and its subsequent hydrolysis by HslU are essential for unfolding of protein substrates subsequently hydrolyzed by HslV. HslU recognizes the N-terminal part of its protein substrates and unfolds these before they are guided to HslV for hydrolysis. The chain is ATP-dependent protease ATPase subunit HslU from Cellvibrio japonicus (strain Ueda107) (Pseudomonas fluorescens subsp. cellulosa).